Here is a 146-residue protein sequence, read N- to C-terminus: Ribosome-binding factor A (146 aa).

The disordered stretch occupies residues 125–146 (RDLDADDDKTKDDRAKDDKDSE).

This sequence belongs to the RbfA family. Monomer. Binds 30S ribosomal subunits, but not 50S ribosomal subunits or 70S ribosomes.

It localises to the cytoplasm. Functionally, one of several proteins that assist in the late maturation steps of the functional core of the 30S ribosomal subunit. Associates with free 30S ribosomal subunits (but not with 30S subunits that are part of 70S ribosomes or polysomes). Required for efficient processing of 16S rRNA. May interact with the 5'-terminal helix region of 16S rRNA. This Mesorhizobium japonicum (strain LMG 29417 / CECT 9101 / MAFF 303099) (Mesorhizobium loti (strain MAFF 303099)) protein is Ribosome-binding factor A.